A 503-amino-acid polypeptide reads, in one-letter code: AMP phosphorylase (503 aa).

AMP is bound by residues G168, 194–199 (SRAITS), and T203. Catalysis depends on D256, which acts as the Proton donor. Residues S264 and K288 each contribute to the AMP site.

The protein belongs to the thymidine/pyrimidine-nucleoside phosphorylase family. Type 2 subfamily.

The enzyme catalyses AMP + phosphate = alpha-D-ribose 1,5-bisphosphate + adenine. The catalysed reaction is CMP + phosphate = cytosine + alpha-D-ribose 1,5-bisphosphate. It carries out the reaction UMP + phosphate = alpha-D-ribose 1,5-bisphosphate + uracil. Its function is as follows. Catalyzes the conversion of AMP and phosphate to adenine and ribose 1,5-bisphosphate (R15P). Exhibits phosphorylase activity toward CMP and UMP in addition to AMP. Functions in an archaeal AMP degradation pathway, together with R15P isomerase and RubisCO. In Pyrococcus abyssi (strain GE5 / Orsay), this protein is AMP phosphorylase (deoA).